Consider the following 173-residue polypeptide: Nicotinamide-nucleotide adenylyltransferase (173 aa).

It belongs to the archaeal NMN adenylyltransferase family.

It localises to the cytoplasm. The catalysed reaction is beta-nicotinamide D-ribonucleotide + ATP + H(+) = diphosphate + NAD(+). The protein operates within cofactor biosynthesis; NAD(+) biosynthesis; NAD(+) from nicotinamide D-ribonucleotide: step 1/1. The polypeptide is Nicotinamide-nucleotide adenylyltransferase (ffdC) (Methanolobus tindarius).